The chain runs to 287 residues: MISPLEKAGILVEALPYIKKFSGKTIVIKYGGHAMLNADLKKAVMTDLVLMKFVGINPVVVHGGGPEITGMLHRLGIESQFVSGLRVTDAPTMEVVEMVLGKLNKEIVALINGLGGRSVGLSGKDANLIMANKKYSNDCQDIGFVGEVTGVNPQLLQTVIQEGYIPVVSPVGISTEGETYNINADTVASAIATALKADKLIILTDVEGILEDRQDKGTLISTVKMEDIPRLIERGVIQGGMIPKVECCMQAIQTGVATTHILDGRVPHSILLEVFTDKGIGTMVVSD.

Substrate-binding positions include 64-65, R86, and N181; that span reads GG.

Belongs to the acetylglutamate kinase family. ArgB subfamily.

It is found in the cytoplasm. The catalysed reaction is N-acetyl-L-glutamate + ATP = N-acetyl-L-glutamyl 5-phosphate + ADP. It participates in amino-acid biosynthesis; L-arginine biosynthesis; N(2)-acetyl-L-ornithine from L-glutamate: step 2/4. Functionally, catalyzes the ATP-dependent phosphorylation of N-acetyl-L-glutamate. This chain is Acetylglutamate kinase, found in Desulforamulus reducens (strain ATCC BAA-1160 / DSM 100696 / MI-1) (Desulfotomaculum reducens).